The primary structure comprises 331 residues: tRNA N6-adenosine threonylcarbamoyltransferase (331 aa).

Residues H108 and H112 each coordinate Fe cation. Substrate contacts are provided by residues 129-133 (LVSGG), D161, E178, and S258. D286 is a binding site for Fe cation.

It belongs to the KAE1 / TsaD family. Requires Fe(2+) as cofactor.

The protein localises to the cytoplasm. It catalyses the reaction L-threonylcarbamoyladenylate + adenosine(37) in tRNA = N(6)-L-threonylcarbamoyladenosine(37) in tRNA + AMP + H(+). Required for the formation of a threonylcarbamoyl group on adenosine at position 37 (t(6)A37) in tRNAs that read codons beginning with adenine. Is probably involved in the transfer of the threonylcarbamoyl moiety of threonylcarbamoyl-AMP (TC-AMP) to the N6 group of A37. This chain is tRNA N6-adenosine threonylcarbamoyltransferase, found in Caldivirga maquilingensis (strain ATCC 700844 / DSM 13496 / JCM 10307 / IC-167).